The sequence spans 264 residues: 3-methyl-2-oxobutanoate hydroxymethyltransferase (264 aa).

The Mg(2+) site is built by Asp45 and Asp84. 3-methyl-2-oxobutanoate is bound by residues 45–46, Asp84, and Lys112; that span reads DS. Glu114 is a Mg(2+) binding site. Residue Glu181 is the Proton acceptor of the active site.

Belongs to the PanB family. Homodecamer; pentamer of dimers. The cofactor is Mg(2+).

Its subcellular location is the cytoplasm. The enzyme catalyses 3-methyl-2-oxobutanoate + (6R)-5,10-methylene-5,6,7,8-tetrahydrofolate + H2O = 2-dehydropantoate + (6S)-5,6,7,8-tetrahydrofolate. The protein operates within cofactor biosynthesis; (R)-pantothenate biosynthesis; (R)-pantoate from 3-methyl-2-oxobutanoate: step 1/2. Its function is as follows. Catalyzes the reversible reaction in which hydroxymethyl group from 5,10-methylenetetrahydrofolate is transferred onto alpha-ketoisovalerate to form ketopantoate. In Escherichia coli O7:K1 (strain IAI39 / ExPEC), this protein is 3-methyl-2-oxobutanoate hydroxymethyltransferase.